A 255-amino-acid polypeptide reads, in one-letter code: CD320 antigen (255 aa).

Positions 1 to 29 (MNGWVARGLARRAAALGLGLRVLLCFGLC) are cleaved as a signal peptide. The Extracellular portion of the chain corresponds to 30-203 (LEIAPTPIQT…SVQSGNRNVY (174 aa)). 2 LDL-receptor class A domains span residues 52 to 89 (SCPP…EECG) and 120 to 157 (SCPE…LGCG). 6 disulfide bridges follow: C53/C66, C60/C79, C73/C88, C121/C134, C128/C147, and C141/C156. W71, D74, D76, D78, D84, and E85 together coordinate Ca(2+). Ca(2+)-binding residues include W139, D142, H144, D146, D152, and E153. N-linked (GlcNAc...) asparagine glycosylation is found at N177 and N183. Residues 204–224 (GIIAAVAVLSISLAAGILFAL) traverse the membrane as a helical segment. Residues 225-255 (SRLCAQGCLAPLGLLVSMKGSLQPEKKTSVL) are Cytoplasmic-facing.

In terms of assembly, interacts (via LDL-receptor class A domains) with TCN2.

The protein localises to the cell membrane. Functionally, receptor for transcobalamin saturated with cobalamin (TCbl). Plays an important role in cobalamin uptake. Plasma membrane protein that is expressed on follicular dendritic cells (FDC) and mediates interaction with germinal center B cells. Functions as a costimulator to promote B cell responses to antigenic stimuli; promotes B cell differentiation and proliferation. Germinal center-B (GC-B) cells differentiate into memory B-cells and plasma cells (PC) through interaction with T-cells and follicular dendritic cells (FDC). CD320 augments the proliferation of PC precursors generated by IL-10. In Bos taurus (Bovine), this protein is CD320 antigen (CD320).